Reading from the N-terminus, the 138-residue chain is U1 small nuclear ribonucleoprotein C (138 aa).

Residues 4 to 36 (YYCDYCDTFLTHDSPSVRKTHNNGRKHKENVRF) form a Matrin-type zinc finger. The segment at 58-138 (QSKPNSQMPP…MGRPPMSLRS (81 aa)) is disordered. The segment covering 67 to 109 (PNAPPGLMPPPGMLPPPGGMPPGRMPPQGLPFPPPGPIPPPPG) has biased composition (pro residues). Residues 113-138 (MRPPHGQMHMGGPRPQMGRPPMSLRS) are compositionally biased toward low complexity.

It belongs to the U1 small nuclear ribonucleoprotein C family. In terms of assembly, U1 snRNP is composed of the 7 core Sm proteins B/B', D1, D2, D3, E, F and G that assemble in a heptameric protein ring on the Sm site of the small nuclear RNA to form the core snRNP, and at least 3 U1 snRNP-specific proteins U1-70K, U1-A and U1-C. U1-C interacts with U1 snRNA and the 5' splice-site region of the pre-mRNA.

It is found in the nucleus. In terms of biological role, component of the spliceosomal U1 snRNP, which is essential for recognition of the pre-mRNA 5' splice-site and the subsequent assembly of the spliceosome. U1-C is directly involved in initial 5' splice-site recognition for both constitutive and regulated alternative splicing. The interaction with the 5' splice-site seems to precede base-pairing between the pre-mRNA and the U1 snRNA. Stimulates commitment or early (E) complex formation by stabilizing the base pairing of the 5' end of the U1 snRNA and the 5' splice-site region. This Nematostella vectensis (Starlet sea anemone) protein is U1 small nuclear ribonucleoprotein C.